A 311-amino-acid chain; its full sequence is Glutamyl-Q tRNA(Asp) synthetase (311 aa).

L-glutamate-binding positions include 14–18 (RYAPS) and glutamate 50. Positions 17–27 (PSPSGDLHLGN) match the 'HIGH' region motif. Residues cysteine 104, cysteine 106, tyrosine 125, and cysteine 129 each coordinate Zn(2+). L-glutamate is bound by residues tyrosine 186 and arginine 204. The 'KMSKS' region signature appears at 242–246 (RLAKR). Lysine 245 contributes to the ATP binding site.

The protein belongs to the class-I aminoacyl-tRNA synthetase family. GluQ subfamily. The cofactor is Zn(2+).

Its function is as follows. Catalyzes the tRNA-independent activation of glutamate in presence of ATP and the subsequent transfer of glutamate onto a tRNA(Asp). Glutamate is transferred on the 2-amino-5-(4,5-dihydroxy-2-cyclopenten-1-yl) moiety of the queuosine in the wobble position of the QUC anticodon. The protein is Glutamyl-Q tRNA(Asp) synthetase of Nocardia farcinica (strain IFM 10152).